The chain runs to 380 residues: Cytochrome b (380 aa).

4 consecutive transmembrane segments (helical) span residues 33-53 (FGSL…FLAM), 77-98 (WLIR…YLHI), 113-133 (WNIG…GYVL), and 178-198 (FFAF…LHLL). 2 residues coordinate heme b: His-83 and His-97. Residues His-182 and His-196 each coordinate heme b. His-201 is an a ubiquinone binding site. Helical transmembrane passes span 226–246 (YKDL…ALFT), 288–308 (LGGV…PILH), 320–340 (VTQF…WIGG), and 347–367 (YIII…LIMP).

Belongs to the cytochrome b family. In terms of assembly, the cytochrome bc1 complex contains 3 respiratory subunits (MT-CYB, CYC1 and UQCRFS1), 2 core proteins (UQCRC1 and UQCRC2) and probably 6 low-molecular weight proteins. Requires heme b as cofactor.

It is found in the mitochondrion inner membrane. In terms of biological role, component of the ubiquinol-cytochrome c reductase complex (complex III or cytochrome b-c1 complex) that is part of the mitochondrial respiratory chain. The b-c1 complex mediates electron transfer from ubiquinol to cytochrome c. Contributes to the generation of a proton gradient across the mitochondrial membrane that is then used for ATP synthesis. The polypeptide is Cytochrome b (mt-cyb) (Pagrus major (Red sea bream)).